Consider the following 311-residue polypeptide: MALPILLDCDPGHDDAIAIVLALASPELDVKAITSSAGNQTPEKTLRNVLRMLTLLNRTDIPVAGGAVKPLMRELIIADNVHGESGLDGPALPEPTFAPQNCTAVELMAKTLRESAEPVTIVSTGPQTNVALLLNSHPELHSKIARIVIMGGAMGLGNWTPAAEFNIYVDPEAAEIVFQSGIPVVMAGLDVTHKAQIHVEDTERFRAIGNPVSTIVAELLDFFLEYHKDEKWGFVGAPLHDPCTIAWLLKPELFTTVERWVGVETQGKYTQGMTVVDYYYLTGNKPNATVIVDVDRQGFVDLLADRLKFYA.

The active site involves His-240.

The protein belongs to the IUNH family. RihA subfamily.

Functionally, hydrolyzes cytidine or uridine to ribose and cytosine or uracil, respectively. This chain is Pyrimidine-specific ribonucleoside hydrolase RihA, found in Shigella flexneri serotype 5b (strain 8401).